The chain runs to 330 residues: D-alanine--D-alanine ligase (330 aa).

The ATP-grasp domain maps to 121–321 (NHYLKDFGVK…IKDVMTDIIE (201 aa)). 149-204 (VTRLGLPIFVKPNDGGSSFGVTKVKEVSAIQPAIAKAFGEGREVILERFIDGTEVT) contributes to the ATP binding site. Mg(2+) contacts are provided by D275, E288, and N290.

It belongs to the D-alanine--D-alanine ligase family. Mg(2+) serves as cofactor. The cofactor is Mn(2+).

The protein localises to the cytoplasm. It catalyses the reaction 2 D-alanine + ATP = D-alanyl-D-alanine + ADP + phosphate + H(+). Its pathway is cell wall biogenesis; peptidoglycan biosynthesis. Functionally, cell wall formation. The polypeptide is D-alanine--D-alanine ligase (Parabacteroides distasonis (strain ATCC 8503 / DSM 20701 / CIP 104284 / JCM 5825 / NCTC 11152)).